Consider the following 50-residue polypeptide: Photosystem II reaction center protein M (50 aa).

A helical transmembrane segment spans residues 7-27 (GFVASLLFVGVPTIFLIGLFI).

The protein belongs to the PsbM family. In terms of assembly, PSII is composed of 1 copy each of membrane proteins PsbA, PsbB, PsbC, PsbD, PsbE, PsbF, PsbH, PsbI, PsbJ, PsbK, PsbL, PsbM, PsbT, PsbX, PsbY, Psb30/Ycf12, peripheral proteins PsbO, CyanoQ (PsbQ), PsbU, PsbV and a large number of cofactors. It forms dimeric complexes.

Its subcellular location is the cellular thylakoid membrane. In terms of biological role, one of the components of the core complex of photosystem II (PSII). PSII is a light-driven water:plastoquinone oxidoreductase that uses light energy to abstract electrons from H(2)O, generating O(2) and a proton gradient subsequently used for ATP formation. It consists of a core antenna complex that captures photons, and an electron transfer chain that converts photonic excitation into a charge separation. This subunit is found at the monomer-monomer interface. The polypeptide is Photosystem II reaction center protein M (Prochlorococcus marinus (strain MIT 9301)).